Here is a 366-residue protein sequence, read N- to C-terminus: tRNA/tmRNA (uracil-C(5))-methyltransferase (366 aa).

Residues Gln188, Tyr216, Asn221, Glu237, and Asp297 each coordinate S-adenosyl-L-methionine. Cys322 serves as the catalytic Nucleophile. Glu356 serves as the catalytic Proton acceptor.

It belongs to the class I-like SAM-binding methyltransferase superfamily. RNA M5U methyltransferase family. TrmA subfamily.

The enzyme catalyses uridine(54) in tRNA + S-adenosyl-L-methionine = 5-methyluridine(54) in tRNA + S-adenosyl-L-homocysteine + H(+). It catalyses the reaction uridine(341) in tmRNA + S-adenosyl-L-methionine = 5-methyluridine(341) in tmRNA + S-adenosyl-L-homocysteine + H(+). In terms of biological role, dual-specificity methyltransferase that catalyzes the formation of 5-methyluridine at position 54 (m5U54) in all tRNAs, and that of position 341 (m5U341) in tmRNA (transfer-mRNA). The protein is tRNA/tmRNA (uracil-C(5))-methyltransferase of Histophilus somni (strain 129Pt) (Haemophilus somnus).